We begin with the raw amino-acid sequence, 270 residues long: Karrikin insensitive 2 receptor CA (270 aa).

S95 (nucleophile) is an active-site residue. Residues D217 and H246 contribute to the active site.

It belongs to the AB hydrolase superfamily. In terms of tissue distribution, expressed in stigma.

The protein localises to the nucleus. It localises to the cytoplasm. Its function is as follows. Hydrolase which may be involved in plant olfaction during volatile communication. This is Karrikin insensitive 2 receptor CA from Petunia hybrida (Petunia).